Consider the following 253-residue polypeptide: Ubiquinone/menaquinone biosynthesis C-methyltransferase UbiE (253 aa).

S-adenosyl-L-methionine contacts are provided by residues threonine 76, aspartate 97, asparagine 125–alanine 126, and serine 142.

The protein belongs to the class I-like SAM-binding methyltransferase superfamily. MenG/UbiE family.

The enzyme catalyses a 2-demethylmenaquinol + S-adenosyl-L-methionine = a menaquinol + S-adenosyl-L-homocysteine + H(+). It catalyses the reaction a 2-methoxy-6-(all-trans-polyprenyl)benzene-1,4-diol + S-adenosyl-L-methionine = a 5-methoxy-2-methyl-3-(all-trans-polyprenyl)benzene-1,4-diol + S-adenosyl-L-homocysteine + H(+). The protein operates within quinol/quinone metabolism; menaquinone biosynthesis; menaquinol from 1,4-dihydroxy-2-naphthoate: step 2/2. It functions in the pathway cofactor biosynthesis; ubiquinone biosynthesis. Its function is as follows. Methyltransferase required for the conversion of demethylmenaquinol (DMKH2) to menaquinol (MKH2) and the conversion of 2-polyprenyl-6-methoxy-1,4-benzoquinol (DDMQH2) to 2-polyprenyl-3-methyl-6-methoxy-1,4-benzoquinol (DMQH2). This chain is Ubiquinone/menaquinone biosynthesis C-methyltransferase UbiE, found in Xylella fastidiosa (strain M12).